The chain runs to 332 residues: Galactinol synthase 7 (332 aa).

The active site involves Lys-101. Residues Asp-117, Asp-119, and His-255 each contribute to the Mn(2+) site.

The protein belongs to the glycosyltransferase 8 family. Galactosyltransferase subfamily. The cofactor is a divalent metal cation.

It is found in the cytoplasm. It catalyses the reaction myo-inositol + UDP-alpha-D-galactose = alpha-D-galactosyl-(1-&gt;3)-1D-myo-inositol + UDP + H(+). Galactinol synthase involved in the biosynthesis of raffinose family oligosaccharides (RFOs) that function as osmoprotectants. May promote plant stress tolerance. The polypeptide is Galactinol synthase 7 (GOLS7) (Arabidopsis thaliana (Mouse-ear cress)).